Here is a 101-residue protein sequence, read N- to C-terminus: MYAIVKTGGKQYKVAEGDFVKVEKIEGEPGSSVALTPILLVDGADVTTKAADLAKVSVTAEIVEAVKGPKIKILKYKNKTGYKKRQGHRQQLTVLKITGIK.

Belongs to the bacterial ribosomal protein bL21 family. In terms of assembly, part of the 50S ribosomal subunit. Contacts protein L20.

Its function is as follows. This protein binds to 23S rRNA in the presence of protein L20. This chain is Large ribosomal subunit protein bL21, found in Corynebacterium diphtheriae (strain ATCC 700971 / NCTC 13129 / Biotype gravis).